The chain runs to 449 residues: Hyaluronidase-1 (449 aa).

The N-terminal stretch at 1–23 (MYHIWIKFLAAWIFLKRFNGVHV) is a signal peptide. Intrachain disulfides connect Cys-47–Cys-340 and Cys-211–Cys-227. 3 N-linked (GlcNAc...) asparagine glycosylation sites follow: Asn-67, Asn-103, and Asn-111. Glu-135 functions as the Proton donor in the catalytic mechanism. The N-linked (GlcNAc...) asparagine glycan is linked to Asn-153. A glycan (N-linked (GlcNAc...) asparagine) is linked at Asn-357. Cystine bridges form between Cys-365–Cys-376, Cys-370–Cys-427, and Cys-429–Cys-438. The N-linked (GlcNAc...) asparagine glycan is linked to Asn-401. Residues 427-438 (CQCYQGWKGLYC) enclose the EGF-like domain.

It belongs to the glycosyl hydrolase 56 family. As to quaternary structure, monomer. As to expression, expressed by the venom gland.

Its subcellular location is the secreted. It catalyses the reaction Random hydrolysis of (1-&gt;4)-linkages between N-acetyl-beta-D-glucosamine and D-glucuronate residues in hyaluronate.. In terms of biological role, snake venom endo-hyaluronidase that degrades hyaluronan to smaller oligosaccharide fragments. In venom, it is not toxic by itself, but increases the diffusion of other venom proteins by degrading the extracellular matrix. In addition, it displays antiedematogenic activity. This is Hyaluronidase-1 from Cerastes cerastes (Horned desert viper).